The sequence spans 158 residues: Large ribosomal subunit protein bL35m (158 aa).

Belongs to the bacterial ribosomal protein bL35 family.

Its subcellular location is the mitochondrion. This Caenorhabditis elegans protein is Large ribosomal subunit protein bL35m (mrpl-35).